A 217-amino-acid chain; its full sequence is Peroxiredoxin Q, chloroplastic (217 aa).

Residues 1 to 65 constitute a chloroplast transit peptide; it reads MAAICLPVAK…PPPSYSARIS (65 aa). Residues 70-217 form the Thioredoxin domain; the sequence is VSKGSVPPQF…DETLKFLQSA (148 aa). Cys112 serves as the catalytic Cysteine sulfenic acid (-SOH) intermediate. Cysteines 112 and 117 form a disulfide.

Belongs to the peroxiredoxin family. BCP/PrxQ subfamily. As to quaternary structure, monomer. In terms of tissue distribution, expressed in the leaves, roots and stems.

The protein resides in the plastid. Its subcellular location is the chloroplast thylakoid lumen. The catalysed reaction is a hydroperoxide + [thioredoxin]-dithiol = an alcohol + [thioredoxin]-disulfide + H2O. Functionally, thiol-specific peroxidase that catalyzes the reduction of hydrogen peroxide and organic hydroperoxides to water and alcohols, respectively. Plays a role in cell protection against oxidative stress by detoxifying peroxides. Involved in both resistance against fungal disease and oxidative stress. The polypeptide is Peroxiredoxin Q, chloroplastic (AFP1) (Gentiana triflora (Clustered gentian)).